A 353-amino-acid chain; its full sequence is Tetraacyldisaccharide 4'-kinase (353 aa).

An ATP-binding site is contributed by 49 to 56 (TAGGTGKT).

The protein belongs to the LpxK family.

The catalysed reaction is a lipid A disaccharide + ATP = a lipid IVA + ADP + H(+). The protein operates within glycolipid biosynthesis; lipid IV(A) biosynthesis; lipid IV(A) from (3R)-3-hydroxytetradecanoyl-[acyl-carrier-protein] and UDP-N-acetyl-alpha-D-glucosamine: step 6/6. Functionally, transfers the gamma-phosphate of ATP to the 4'-position of a tetraacyldisaccharide 1-phosphate intermediate (termed DS-1-P) to form tetraacyldisaccharide 1,4'-bis-phosphate (lipid IVA). This is Tetraacyldisaccharide 4'-kinase from Chlorobium phaeovibrioides (strain DSM 265 / 1930) (Prosthecochloris vibrioformis (strain DSM 265)).